We begin with the raw amino-acid sequence, 460 residues long: Proline--tRNA ligase (460 aa).

It belongs to the class-II aminoacyl-tRNA synthetase family. ProS type 3 subfamily. Homodimer.

The protein resides in the cytoplasm. It carries out the reaction tRNA(Pro) + L-proline + ATP = L-prolyl-tRNA(Pro) + AMP + diphosphate. In terms of biological role, catalyzes the attachment of proline to tRNA(Pro) in a two-step reaction: proline is first activated by ATP to form Pro-AMP and then transferred to the acceptor end of tRNA(Pro). In Methanococcus maripaludis (strain DSM 14266 / JCM 13030 / NBRC 101832 / S2 / LL), this protein is Proline--tRNA ligase.